A 174-amino-acid chain; its full sequence is Acetolactate synthase small subunit (174 aa).

In terms of domain architecture, ACT spans 4–78; sequence TLSVLVQDEA…NILNVQDVTN (75 aa).

It belongs to the acetolactate synthase small subunit family. As to quaternary structure, dimer of large and small chains.

The protein localises to the plastid. Its subcellular location is the chloroplast. It carries out the reaction 2 pyruvate + H(+) = (2S)-2-acetolactate + CO2. It participates in amino-acid biosynthesis; L-isoleucine biosynthesis; L-isoleucine from 2-oxobutanoate: step 1/4. It functions in the pathway amino-acid biosynthesis; L-valine biosynthesis; L-valine from pyruvate: step 1/4. This Pyropia yezoensis (Susabi-nori) protein is Acetolactate synthase small subunit (ilvH).